The sequence spans 107 residues: Cytochrome c2 (107 aa).

Heme c is bound by residues Cys-14, Cys-17, His-18, and Met-80.

Belongs to the cytochrome c family. Binds 1 heme c group covalently per subunit.

Functionally, cytochrome c2 is found mainly in purple, non-sulfur, photosynthetic bacteria where it functions as the electron donor to the oxidized bacteriochlorophyll in the photophosphorylation pathway. However, it may also have a role in the respiratory chain and is found in some non-photosynthetic bacteria. The sequence is that of Cytochrome c2 from Rhodoblastus acidophilus (Rhodopseudomonas acidophila).